A 431-amino-acid polypeptide reads, in one-letter code: Hydroxylamine reductase (431 aa).

Positions 5, 8, 17, and 23 each coordinate [4Fe-4S] cluster. Hybrid [4Fe-2O-2S] cluster contacts are provided by histidine 131, glutamate 155, cysteine 199, cysteine 286, cysteine 314, cysteine 339, glutamate 373, and lysine 375. The residue at position 286 (cysteine 286) is a Cysteine persulfide.

This sequence belongs to the HCP family. [4Fe-4S] cluster is required as a cofactor. Requires hybrid [4Fe-2O-2S] cluster as cofactor.

The protein resides in the cytoplasm. The catalysed reaction is A + NH4(+) + H2O = hydroxylamine + AH2 + H(+). In terms of biological role, catalyzes the reduction of hydroxylamine to form NH(3) and H(2)O. The sequence is that of Hydroxylamine reductase from Thermotoga petrophila (strain ATCC BAA-488 / DSM 13995 / JCM 10881 / RKU-1).